Here is a 416-residue protein sequence, read N- to C-terminus: Tryptophan synthase beta chain (416 aa).

Lys-109 carries the N6-(pyridoxal phosphate)lysine modification.

The protein belongs to the TrpB family. In terms of assembly, tetramer of two alpha and two beta chains. Requires pyridoxal 5'-phosphate as cofactor.

The catalysed reaction is (1S,2R)-1-C-(indol-3-yl)glycerol 3-phosphate + L-serine = D-glyceraldehyde 3-phosphate + L-tryptophan + H2O. It functions in the pathway amino-acid biosynthesis; L-tryptophan biosynthesis; L-tryptophan from chorismate: step 5/5. Its function is as follows. The beta subunit is responsible for the synthesis of L-tryptophan from indole and L-serine. This chain is Tryptophan synthase beta chain, found in Prochlorococcus marinus (strain SARG / CCMP1375 / SS120).